Reading from the N-terminus, the 421-residue chain is MEEDERGKLFVGGLSWETTQENLSRYFCRFGDIIDCVVMKNNESGRSRGFGFVTFADPTNVNHVLQNGPHTLDGRTIDPKPCNPRTLQKPKKGGGYKVFLGGLPSNVTETDLRTFFNRYGKVTEVVIMYDQEKKKSRGFGFLSFEEESSVEHVTNERYINLNGKQVEIKKAEPRDGSGGQNSNNSTVGGAYGKLGNECSHWGPHHAPINMMQGQNGQMGGPPLNMPIGAPNMMPGYQGWGTSPQQQQYGYGNSGPGSYQGWGAPPGPQGPPPQWSNYAGPQQTQGYGGYDMYNSTSTGAPSGPSGGGSWNSWNMPPNSAGPTGAPGAGAGTATDMYSRAQAWATGGPSTTGPVGGMPRTGPGNSASKSGSEYDYGGYGSGYDYDYSNYVKQEGASNYGAGPRSAYGNDSSTQPPYATSQAV.

RRM domains lie at 7–88 and 96–173; these read GKLF…RTLQ and YKVF…KAEP. Disordered stretches follow at residues 171-191 and 240-373; these read AEPRDGSGGQNSNNSTVGGAY and GTSP…SEYD. Serine 177 is modified (phosphoserine). Residues 240-250 show a composition bias toward polar residues; it reads GTSPQQQQYGY. Positions 264-273 are enriched in pro residues; that stretch reads PPGPQGPPPQ. Polar residues predominate over residues 275 to 284; that stretch reads SNYAGPQQTQ. The segment covering 293-302 has biased composition (low complexity); the sequence is NSTSTGAPSG. A phosphoserine mark is found at serine 366, serine 368, and serine 370. Residue tyrosine 372 is modified to Phosphotyrosine. The residue at position 379 (serine 379) is a Phosphoserine. The tract at residues 392-421 is disordered; the sequence is EGASNYGAGPRSAYGNDSSTQPPYATSQAV. The span at 406-421 shows a compositional bias: polar residues; sequence GNDSSTQPPYATSQAV.

As to quaternary structure, interacts with sqd; the interaction is RNA-dependent and may be specific for sqd isoform A/sqdA. Interacts with otu; the interaction is RNA-independent.

It localises to the nucleus. The protein resides in the cytoplasm. In terms of biological role, this protein is a component of ribonucleosomes. Could be needed to organize a concentration gradient of a dorsalizing morphogen (Dm) originating in the germinal vesicle. Interacts with grk mRNA (via 3' UTR) and involved in its localization to the dorsal anterior region of the oocyte during dorsal-ventral axis determination; may function as a ribonuclear protein complex together with sqd and otu. Required for polytene chromosome dispersal in nurse cells during oogenesis. May be involved in the regulation of splicing. This chain is Heterogeneous nuclear ribonucleoprotein 27C, found in Drosophila melanogaster (Fruit fly).